A 317-amino-acid chain; its full sequence is NAD kinase (317 aa).

Asp82 serves as the catalytic Proton acceptor. Residues Asp82–Gly83, Arg87, Asn157–Glu158, Asp187, and Thr198–Ser203 contribute to the NAD(+) site.

The protein belongs to the NAD kinase family. Requires a divalent metal cation as cofactor.

The protein localises to the cytoplasm. The enzyme catalyses NAD(+) + ATP = ADP + NADP(+) + H(+). Involved in the regulation of the intracellular balance of NAD and NADP, and is a key enzyme in the biosynthesis of NADP. Catalyzes specifically the phosphorylation on 2'-hydroxyl of the adenosine moiety of NAD to yield NADP. The protein is NAD kinase of Corynebacterium diphtheriae (strain ATCC 700971 / NCTC 13129 / Biotype gravis).